A 137-amino-acid chain; its full sequence is Nucleoside diphosphate kinase (137 aa).

Lys-9, Phe-57, Arg-85, Thr-91, Arg-102, and Asn-112 together coordinate ATP. His-115 (pros-phosphohistidine intermediate) is an active-site residue.

This sequence belongs to the NDK family. As to quaternary structure, homotetramer. The cofactor is Mg(2+).

Its subcellular location is the cytoplasm. It catalyses the reaction a 2'-deoxyribonucleoside 5'-diphosphate + ATP = a 2'-deoxyribonucleoside 5'-triphosphate + ADP. It carries out the reaction a ribonucleoside 5'-diphosphate + ATP = a ribonucleoside 5'-triphosphate + ADP. Its function is as follows. Major role in the synthesis of nucleoside triphosphates other than ATP. The ATP gamma phosphate is transferred to the NDP beta phosphate via a ping-pong mechanism, using a phosphorylated active-site intermediate. This is Nucleoside diphosphate kinase from Campylobacter lari (strain RM2100 / D67 / ATCC BAA-1060).